The primary structure comprises 350 residues: tRNA uridine(34) hydroxylase (350 aa).

Residues 146–240 (DDPDALFIDM…YARKAREQGL (95 aa)) form the Rhodanese domain. The active-site Cysteine persulfide intermediate is Cys200.

This sequence belongs to the TrhO family.

The enzyme catalyses uridine(34) in tRNA + AH2 + O2 = 5-hydroxyuridine(34) in tRNA + A + H2O. Functionally, catalyzes oxygen-dependent 5-hydroxyuridine (ho5U) modification at position 34 in tRNAs, the first step in 5-carboxymethoxyuridine (cmo5U) biosynthesis. May be part of an alternate pathway, which is able to bypass cmo5U biogenesis in a subset of tRNAs under aerobic conditions. This Escherichia coli O45:K1 (strain S88 / ExPEC) protein is tRNA uridine(34) hydroxylase.